The chain runs to 245 residues: Probable metal transport system ATP-binding protein CPn_0542/CP_0210/CPj0542/CpB0563 (245 aa).

One can recognise an ABC transporter domain in the interval 5–240; it reads ILAEGLAFRY…CCHPYKNQEF (236 aa). 39-46 is a binding site for ATP; sequence GPNGGGKS.

Belongs to the ABC transporter superfamily.

It is found in the cell inner membrane. In terms of biological role, part of an ATP-driven transport system CPn0541/CPn0542/CPn0543 for a metal. Probably responsible for energy coupling to the transport system. In Chlamydia pneumoniae (Chlamydophila pneumoniae), this protein is Probable metal transport system ATP-binding protein CPn_0542/CP_0210/CPj0542/CpB0563.